A 463-amino-acid polypeptide reads, in one-letter code: Xanthine permease XanP (463 aa).

12 helical membrane-spanning segments follow: residues 43-63 (LLAMFVAVITPALLICQALGL), 71-91 (IISMSLFASGVASIIQIKAWG), 93-113 (VGSGLLSIQGTSFNFVAPLIM), 126-146 (PTMMAALFGTLMLASCTEMVI), 156-176 (IITPLVSGVVVMIIGLSLIQV), 192-212 (TFGAPKNLLLAGVVLALIILL), 222-242 (VASLVIAMAAGYALAWFMGML), 260-280 (LYYGLGIEWSLLLPLMLVFMI), 352-372 (GFVVALMLIVLGLFPAVSGFV), 379-399 (VLGGATLVMFGTIAASGVRIV), 409-429 (ILIIALSLAVGLGVSQQPLIL), and 439-459 (LLSSGIAAGGITAIVLNLIFP).

The protein belongs to the nucleobase:cation symporter-2 (NCS2) (TC 2.A.40) family.

It is found in the cell inner membrane. It catalyses the reaction xanthine(in) + H(+)(in) = xanthine(out) + H(+)(out). Functionally, specific, proton motive force-dependent high-affinity transporter for xanthine. The polypeptide is Xanthine permease XanP (xanP) (Escherichia coli O6:H1 (strain CFT073 / ATCC 700928 / UPEC)).